A 353-amino-acid chain; its full sequence is MSHILDKIDTVYPFPPKPIPLTQDEKAAYIASIKQLLKEKDAVLIAHYYTDPEIQALAEETGGFVGDSLEMAKFGNRHPAGTLIIAGVRFMGESAKILTPEKRILMPTLEAECSLDLGCPADKFTEFCDAHPDHTVVVYANTSAAVKARADWVVTSSIALEIVEHLDAEDKPIIWGPDRHLGSYIANKTGADMLLWQGECVVHDEFSADALRKMKAVYPDAAILVHPESPASVVELADAVGSTSQLIKAAKELPQQKMIVATDKGIFFKMQQLVPEKELIEAPTAGAGATCRSCAHCPWMAMNGLKAIETALREGGEQHEIFVDEALRVKSLIPLNRMLDFAEKLNMQVKGNV.

His47 and Ser68 together coordinate iminosuccinate. Cys113 lines the [4Fe-4S] cluster pocket. Iminosuccinate is bound by residues 139 to 141 (YAN) and Ser156. Residue Cys200 coordinates [4Fe-4S] cluster. Iminosuccinate is bound by residues 226–228 (HPE) and Thr243. [4Fe-4S] cluster is bound at residue Cys297.

Belongs to the quinolinate synthase family. Type 1 subfamily. It depends on [4Fe-4S] cluster as a cofactor.

It localises to the cytoplasm. The catalysed reaction is iminosuccinate + dihydroxyacetone phosphate = quinolinate + phosphate + 2 H2O + H(+). The protein operates within cofactor biosynthesis; NAD(+) biosynthesis; quinolinate from iminoaspartate: step 1/1. Functionally, catalyzes the condensation of iminoaspartate with dihydroxyacetone phosphate to form quinolinate. The sequence is that of Quinolinate synthase from Vibrio vulnificus (strain YJ016).